The primary structure comprises 270 residues: GTP cyclohydrolase FolE2 2 (270 aa).

The protein belongs to the GTP cyclohydrolase IV family.

The catalysed reaction is GTP + H2O = 7,8-dihydroneopterin 3'-triphosphate + formate + H(+). It participates in cofactor biosynthesis; 7,8-dihydroneopterin triphosphate biosynthesis; 7,8-dihydroneopterin triphosphate from GTP: step 1/1. Its function is as follows. Converts GTP to 7,8-dihydroneopterin triphosphate. The chain is GTP cyclohydrolase FolE2 2 from Dechloromonas aromatica (strain RCB).